The chain runs to 238 residues: Cysteine-rich venom protein pseudechetoxin-like (238 aa).

A signal peptide spans 1 to 19; it reads MIAFLVLLSLAAVLQQSSG. A propeptide spanning residues 20–28 is cleaved from the precursor; that stretch reads TVDFASESS. In terms of domain architecture, SCP spans 38-164; the sequence is VDKHNDLRRS…STKYLYVCQY (127 aa). Disulfide bonds link C75-C153, C92-C165, C148-C162, C184-C191, C187-C196, C200-C233, C209-C227, and C218-C231. Residues 200 to 233 enclose the ShKT domain; it reads CKHNDDLSNCKTLVKKHKCQTEWIKSKCPATCFC.

It belongs to the CRISP family. As to expression, expressed by the venom gland.

Its subcellular location is the secreted. Functionally, blocks olfactory (CNGA2) and retinal (CNGA1) CNG channel currents. Does not affect neither depolarization- nor caffeine-induced contraction of smooth muscle. The chain is Cysteine-rich venom protein pseudechetoxin-like from Pseudonaja textilis (Eastern brown snake).